The chain runs to 1645 residues: Protein MON2 homolog (1645 aa).

The protein belongs to the MON2 family.

May be required for traffic between late Golgi and early endosomes. The chain is Protein MON2 homolog from Caenorhabditis briggsae.